The chain runs to 256 residues: DNA repair protein RecO (256 aa).

It belongs to the RecO family.

Its function is as follows. Involved in DNA repair and RecF pathway recombination. The chain is DNA repair protein RecO from Shouchella clausii (strain KSM-K16) (Alkalihalobacillus clausii).